Here is a 392-residue protein sequence, read N- to C-terminus: Na(+)/H(+) antiporter NhaA (392 aa).

Transmembrane regions (helical) follow at residues 17–37 (ILLIVAAIIALIMANTPLSAL), 59–79 (LILWVNDALMAIFFLVVGLEV), 95–115 (IFPAIAAVGGMLAPALIYLFF), 125–145 (GWAIPAATDIAFALGVMALLG), 154–174 (VFLLALAIIDDLGVIVIIALF), 179–199 (VALVPLLLAALITIMLFILNW), 213–233 (FILWVCILKSGIHATIAGVIV), 254–274 (VLHPWVAYLILPLFAFSNAGV), 290–310 (VGIALGLFLGKPIGIFLFSWV), 328–348 (IFAVSVLCGIGFTMSIFIAGL), and 363–383 (LGILVGSTMAAVVGYLLLNSV).

Belongs to the NhaA Na(+)/H(+) (TC 2.A.33) antiporter family.

The protein resides in the cell inner membrane. It carries out the reaction Na(+)(in) + 2 H(+)(out) = Na(+)(out) + 2 H(+)(in). Na(+)/H(+) antiporter that extrudes sodium in exchange for external protons. In Proteus mirabilis (strain HI4320), this protein is Na(+)/H(+) antiporter NhaA.